Consider the following 148-residue polypeptide: SsrA-binding protein (148 aa).

This sequence belongs to the SmpB family.

It is found in the cytoplasm. Its function is as follows. Required for rescue of stalled ribosomes mediated by trans-translation. Binds to transfer-messenger RNA (tmRNA), required for stable association of tmRNA with ribosomes. tmRNA and SmpB together mimic tRNA shape, replacing the anticodon stem-loop with SmpB. tmRNA is encoded by the ssrA gene; the 2 termini fold to resemble tRNA(Ala) and it encodes a 'tag peptide', a short internal open reading frame. During trans-translation Ala-aminoacylated tmRNA acts like a tRNA, entering the A-site of stalled ribosomes, displacing the stalled mRNA. The ribosome then switches to translate the ORF on the tmRNA; the nascent peptide is terminated with the 'tag peptide' encoded by the tmRNA and targeted for degradation. The ribosome is freed to recommence translation, which seems to be the essential function of trans-translation. The sequence is that of SsrA-binding protein from Mycoplasma mycoides subsp. mycoides SC (strain CCUG 32753 / NCTC 10114 / PG1).